The sequence spans 129 residues: Ropporin-1 (129 aa).

The 24-residue stretch at 11 to 34 (PELPELLKTQPPDLIQWAAEYFGA) folds into the RIIa domain.

It belongs to the ropporin family. Homodimer. Interacts with AKAP3. May interact with SPA17. Interacts with RHPN1. Interacts with FSCB; the interaction increases upon spermatozoa capacitation conditions. Interacts with CFAP61. Sumoylated, sumoylation decreases upon spermatozoa capacitation conditions.

Its subcellular location is the cell projection. It is found in the cilium. It localises to the flagellum. Important for male fertility. With ROPN1L, involved in fibrous sheath integrity and sperm motility, plays a role in PKA-dependent signaling processes required for spermatozoa capacitation. The polypeptide is Ropporin-1 (Mesocricetus auratus (Golden hamster)).